Consider the following 533-residue polypeptide: MAFGSPRNNSILAAAGFPRKVSTVAIAIGGLASFFVFGLLLRLSYPNSSSVGGIFYGIGNPEQVHVPLSLSNHTVNILQKSSDINAFDKNLTSDSSSGLPVVVSKSIPPPDFSSDRKLETPLTQEKEDLVSSDITEKTDVQSGERETNVSKAEDTPSASSPPDDVSETASAEPECDLYQGSWFYDPGGPLYTNNSCPVLTQMQNCQGNGRPDKGYENWRWKPSQCELPRFDARKFLELMKGKTLAFIGDSVARNQMESMLCLLWQVETPVNRGSRKMQRWYFKQSSVMIARIWSSWLVHQFNEKFDYAPEGVTKLKLDLPDERIMEAIPKFDVVVLSSGHWFAKQSVYILKEEIVGGQLWWPDKSKPMKVNNVDAFGISVETILKSMATHPNYSGLTIVRTFSPDHYEGGAWNTGGSCTGKEEPILPGKLVKNGFTEIMHEKQATGYNQAVDKVAENLKLKLKLMDITEAFGYRHDGHPGPFRSPDPNKITKRGPDGRPPPQDCLHWCMPGPVDTWNEMVLELIRRDRKSSST.

A helical; Signal-anchor for type II membrane protein membrane pass occupies residues 21-41; sequence VSTVAIAIGGLASFFVFGLLL. Residues 93–171 form a disordered region; the sequence is SDSSSGLPVV…PDDVSETASA (79 aa). Basic and acidic residues predominate over residues 113–154; sequence SSDRKLETPLTQEKEDLVSSDITEKTDVQSGERETNVSKAED. A GDS motif motif is present at residues 248–250; sequence GDS. The segment at 475–502 is disordered; the sequence is HDGHPGPFRSPDPNKITKRGPDGRPPPQ. The short motif at 503 to 517 is the DCXHWCLPGXXDXWN motif element; the sequence is DCLHWCMPGPVDTWN.

The protein belongs to the PC-esterase family. TBL subfamily.

It is found in the membrane. Its function is as follows. May act as a bridging protein that binds pectin and other cell wall polysaccharides. Probably involved in maintaining esterification of pectins. May be involved in the specific O-acetylation of cell wall polymers. The sequence is that of Protein trichome birefringence-like 18 (TBL18) from Arabidopsis thaliana (Mouse-ear cress).